The following is a 178-amino-acid chain: Inorganic pyrophosphatase (178 aa).

Substrate-binding residues include K29, R43, and Y55. Mg(2+) contacts are provided by D65, D70, and D102. Y141 is a substrate binding site.

The protein belongs to the PPase family. In terms of assembly, homohexamer. Requires Mg(2+) as cofactor.

The protein localises to the cytoplasm. It catalyses the reaction diphosphate + H2O = 2 phosphate + H(+). Catalyzes the hydrolysis of inorganic pyrophosphate (PPi) forming two phosphate ions. This is Inorganic pyrophosphatase from Rickettsia typhi (strain ATCC VR-144 / Wilmington).